The chain runs to 196 residues: Putative 3-methyladenine DNA glycosylase (196 aa).

This sequence belongs to the DNA glycosylase MPG family.

The protein is Putative 3-methyladenine DNA glycosylase of Chlorobium phaeobacteroides (strain DSM 266 / SMG 266 / 2430).